The sequence spans 524 residues: Keratin, type II cytoskeletal 71 (524 aa).

The tract at residues 1-130 is head; it reads MSRQFTCKSG…DPEIQKVRAQ (130 aa). The interval 131–166 is coil 1A; it reads EREQIKALNNKFASFIDKVRFLEQQNQVLQTKWELL. The 314-residue stretch at 131–444 folds into the IF rod domain; it reads EREQIKALNN…KLLESEECRM (314 aa). The segment at 167–185 is linker 1; sequence QQLDLNNCKNNLEPILEGH. Residues 186–277 are coil 1B; it reads ISNMRKQLET…CLFEAEMAQI (92 aa). The segment at 278–301 is linker 12; it reads QSHISDMSVILSMDNNRNLDLDSI. The tract at residues 302–440 is coil 2; it reads IDEVRAQYEE…ATYRKLLESE (139 aa). Residues 441-524 form a tail region; sequence ECRMSGEYSS…LSTPSKKGGR (84 aa). A disordered region spans residues 493-524; the sequence is GGENRSRGSASDYKDTLTKGSSLSTPSKKGGR. Residues 494–509 show a composition bias toward basic and acidic residues; the sequence is GENRSRGSASDYKDTL. The segment covering 510 to 524 has biased composition (polar residues); the sequence is TKGSSLSTPSKKGGR.

The protein belongs to the intermediate filament family. In terms of assembly, heterodimer of a type I and a type II keratin. Associates with KRT16 and/or KRT17. As to expression, specifically expressed in the inner root sheath (IRS) of the hair follicle. Present in Henle and the Huxley layers of the IRS, while expression in the cuticle is unsure (at protein level).

It is found in the cytoplasm. The protein resides in the cytoskeleton. Functionally, plays a central role in hair formation. Essential component of keratin intermediate filaments in the inner root sheath (IRS) of the hair follicle. In Mus musculus (Mouse), this protein is Keratin, type II cytoskeletal 71 (Krt71).